We begin with the raw amino-acid sequence, 161 residues long: Phosphopantetheine adenylyltransferase (161 aa).

Position 11 (serine 11) interacts with substrate. Residues 11–12 (SF) and histidine 19 contribute to the ATP site. Lysine 43, leucine 75, and arginine 89 together coordinate substrate. ATP is bound by residues 90–92 (GLR), glutamate 100, and 125–131 (YSFISSS).

The protein belongs to the bacterial CoaD family. As to quaternary structure, homohexamer. It depends on Mg(2+) as a cofactor.

The protein resides in the cytoplasm. The enzyme catalyses (R)-4'-phosphopantetheine + ATP + H(+) = 3'-dephospho-CoA + diphosphate. It participates in cofactor biosynthesis; coenzyme A biosynthesis; CoA from (R)-pantothenate: step 4/5. Reversibly transfers an adenylyl group from ATP to 4'-phosphopantetheine, yielding dephospho-CoA (dPCoA) and pyrophosphate. This Staphylococcus carnosus (strain TM300) protein is Phosphopantetheine adenylyltransferase.